A 1032-amino-acid chain; its full sequence is GPI ethanolamine phosphate transferase 1 (1032 aa).

Over 1–6 the chain is Cytoplasmic; that stretch reads MARLGR. A helical membrane pass occupies residues 7-27; that stretch reads FGFLALAVVFHLIYAYSIFDI. Topologically, residues 28–468 are lumenal; that stretch reads YFVSPIVSGM…LQTYDWLFLR (441 aa). N-linked (GlcNAc...) asparagine glycosylation is found at Asn-150 and Asn-435. Residues 469–489 form a helical membrane-spanning segment; the sequence is TIITFGYLGWIAYALTTVIDL. Residues 490-500 are Cytoplasmic-facing; that stretch reads HVLHRTSDSKR. The helical transmembrane segment at 501–521 threads the bilayer; sequence TVGSTIFFTSILAALFSVLLY. Topologically, residues 522–523 are lumenal; that stretch reads QK. Residues 524-544 traverse the membrane as a helical segment; the sequence is SSWQYYVYGAFPIFFWEEVFA. Topologically, residues 545 to 564 are cytoplasmic; sequence RRKALIAGREILLGHVRSFG. A helical membrane pass occupies residues 565-585; it reads GYIASGFQLVAFVAVLEALLM. The Lumenal portion of the chain corresponds to 586 to 596; sequence RHQVQSYFHRE. A helical transmembrane segment spans residues 597-617; it reads IYTVCFVLGSFWPILYGVDFV. The Cytoplasmic portion of the chain corresponds to 618 to 622; the sequence is RQNTV. Residues 623–643 traverse the membrane as a helical segment; it reads LSATWAVGCSLMSTFTLLPVI. Residues 644–647 lie on the Lumenal side of the membrane; the sequence is KVEN. The helical transmembrane segment at 648-668 threads the bilayer; the sequence is INTITYGALLMFFTGLFYLLF. Residues 669-688 lie on the Cytoplasmic side of the membrane; it reads EDTILKHSKSSGHAPGAISS. Residues 689–709 traverse the membrane as a helical segment; the sequence is LGSRVIMGMQVGMVLLALIVT. Residues 710-722 lie on the Lumenal side of the membrane; the sequence is RSSVSSLQAKQGL. The helical transmembrane segment at 723-743 threads the bilayer; it reads PFGNQVVGWFVLVASLVLPFF. Topologically, residues 744 to 766 are cytoplasmic; sequence HRLYPNSHYLHRLMVLFLTFSPT. The helical transmembrane segment at 767 to 787 threads the bilayer; sequence FIILTISYEGLFYFVFCMTLV. Topologically, residues 788–841 are lumenal; it reads TWVRLEHAIYVYTARSSAHYGGNNTVPKKPGLNATAVIDGQEYRYRRLGLADTR. 2 N-linked (GlcNAc...) asparagine glycosylation sites follow: Asn-810 and Asn-820. The chain crosses the membrane as a helical span at residues 842–862; the sequence is VALFFFFLLQSAFFSTGNIAS. Residues 863–884 are Cytoplasmic-facing; sequence VSSFSLESVFRLIPVFSPFSQS. Residues 885–905 traverse the membrane as a helical segment; that stretch reads ALLILKLLIPFAIISANLGIL. Residues 906–914 lie on the Lumenal side of the membrane; the sequence is NRRLEVAPS. Residues 915–935 traverse the membrane as a helical segment; it reads ALFMVVMSISDVMTLNFFYMV. The Cytoplasmic portion of the chain corresponds to 936–951; sequence RDEGSWLDIGTTISHF. The chain crosses the membrane as a helical span at residues 952–972; sequence LIASFLCTFVAGLEFLSEVFI. The Lumenal segment spans residues 973 to 1032; sequence SGVDFGPTTKAIGASITKTVGGTAGSDVVDSQSGPEDAANSKKAEGLEGSETIRQNGGSV. The segment at 994 to 1032 is disordered; that stretch reads GTAGSDVVDSQSGPEDAANSKKAEGLEGSETIRQNGGSV.

It belongs to the PIGG/PIGN/PIGO family. PIGN subfamily.

The protein localises to the endoplasmic reticulum membrane. Its pathway is glycolipid biosynthesis; glycosylphosphatidylinositol-anchor biosynthesis. Functionally, ethanolamine phosphate transferase involved in glycosylphosphatidylinositol-anchor biosynthesis. Transfers ethanolamine phosphate to the first alpha-1,4-linked mannose of the glycosylphosphatidylinositol precursor of GPI-anchor. This Aspergillus fumigatus (strain ATCC MYA-4609 / CBS 101355 / FGSC A1100 / Af293) (Neosartorya fumigata) protein is GPI ethanolamine phosphate transferase 1 (mcd4).